The following is a 294-amino-acid chain: ATP synthase gamma chain (294 aa).

The protein belongs to the ATPase gamma chain family. As to quaternary structure, F-type ATPases have 2 components, CF(1) - the catalytic core - and CF(0) - the membrane proton channel. CF(1) has five subunits: alpha(3), beta(3), gamma(1), delta(1), epsilon(1). CF(0) has three main subunits: a, b and c.

The protein localises to the cell inner membrane. Functionally, produces ATP from ADP in the presence of a proton gradient across the membrane. The gamma chain is believed to be important in regulating ATPase activity and the flow of protons through the CF(0) complex. This is ATP synthase gamma chain from Mesorhizobium japonicum (strain LMG 29417 / CECT 9101 / MAFF 303099) (Mesorhizobium loti (strain MAFF 303099)).